We begin with the raw amino-acid sequence, 79 residues long: Small ribosomal subunit protein uS17 (79 aa).

This sequence belongs to the universal ribosomal protein uS17 family. In terms of assembly, part of the 30S ribosomal subunit.

In terms of biological role, one of the primary rRNA binding proteins, it binds specifically to the 5'-end of 16S ribosomal RNA. The chain is Small ribosomal subunit protein uS17 from Rhodospirillum rubrum (strain ATCC 11170 / ATH 1.1.1 / DSM 467 / LMG 4362 / NCIMB 8255 / S1).